A 213-amino-acid polypeptide reads, in one-letter code: DELTA-actitoxin-Aas1a (213 aa).

The signal sequence occupies residues 1-19; it reads MSRLIIAFIVVTMVCSAIA. Residues 20-34 constitute a propeptide that is removed on maturation; the sequence is LPKKKVEPLEKDEKR. A plays an important role in the hemolytic activity region spans residues 37–46; it reads AVAGAVIEGG. Positions 45-64 are N-terminal region; it reads GGNLVMSVLDRILEAIGDVN. 7 residues coordinate phosphocholine: Ser88, Val121, Ser139, Pro141, Tyr167, Tyr171, and Tyr172. The interval 139-154 is trp-rich region, which is important for the binding to lipid membrane; that stretch reads SIPYDYNLYSNWWNVK. The Cell attachment site, crucial for protein stability signature appears at 178–180; the sequence is KGD.

This sequence belongs to the actinoporin family. Sea anemone subfamily. Octamer or nonamer in membranes. Monomer in the soluble state.

Its subcellular location is the secreted. The protein resides in the nematocyst. It localises to the target cell membrane. Functionally, pore-forming protein that forms cation-selective hydrophilic pores of around 1 nm and causes cytolysis. Pore formation is a multi-step process that involves specific recognition of membrane sphingomyelin (but neither cholesterol nor phosphatidylcholine) using aromatic rich region and adjacent phosphocholine (POC) binding site, firm binding to the membrane (mainly driven by hydrophobic interactions) accompanied by the transfer of the N-terminal region to the lipid-water interface and finally pore formation after oligomerization of monomers. This protein shows potent hemolytic activity (EC(50)=8.8 ng/ml) that is specifically inhibited by sphingomyelin. Shows no phospholipase A2 activity, nor antimicrobial activity against the four bacteria tested. Is lethal to crayfish. The chain is DELTA-actitoxin-Aas1a from Anthopleura asiatica (Sea anemone).